Here is a 195-residue protein sequence, read N- to C-terminus: Ubiquitin-conjugating enzyme E2 T (195 aa).

Positions 2-152 (QRTSRLKREL…ARQWTEKHAR (151 aa)) constitute a UBC core domain. C86 functions as the Glycyl thioester intermediate in the catalytic mechanism. Residue K91 forms a Glycyl lysine isopeptide (Lys-Gly) (interchain with G-Cter in ubiquitin) linkage. Residues 146–157 (WTEKHARQKTDE) show a composition bias toward basic and acidic residues. The disordered stretch occupies residues 146–195 (WTEKHARQKTDEEGMPGSLPEVGGSEGPSAAQKRKAGQLSSGGKRFCPDV). K180 participates in a covalent cross-link: Glycyl lysine isopeptide (Lys-Gly) (interchain with G-Cter in ubiquitin). Residue K189 forms a Glycyl lysine isopeptide (Lys-Gly) (interchain with G-Cter in SUMO2) linkage.

It belongs to the ubiquitin-conjugating enzyme family. Interacts with FANCL and BRCA1. In terms of processing, auto-ubiquitinated. Effects of auto-monoubiquitination at Lys-91 and Lys-180 are unclear.

Its subcellular location is the nucleus. It catalyses the reaction S-ubiquitinyl-[E1 ubiquitin-activating enzyme]-L-cysteine + [E2 ubiquitin-conjugating enzyme]-L-cysteine = [E1 ubiquitin-activating enzyme]-L-cysteine + S-ubiquitinyl-[E2 ubiquitin-conjugating enzyme]-L-cysteine.. It functions in the pathway protein modification; protein ubiquitination. Functionally, accepts ubiquitin from the E1 complex and catalyzes its covalent attachment to other proteins. Catalyzes monoubiquitination. Involved in mitomycin-C (MMC)-induced DNA repair: acts as a specific E2 ubiquitin-conjugating enzyme for the Fanconi anemia complex by associating with E3 ubiquitin-protein ligase FANCL and catalyzing monoubiquitination of FANCD2, a key step in the DNA damage pathway. Also mediates monoubiquitination of FANCL and FANCI. May contribute to ubiquitination and degradation of BRCA1. In vitro able to promote polyubiquitination using all 7 ubiquitin Lys residues, but may prefer 'Lys-11'-, 'Lys-27'-, 'Lys-48'- and 'Lys-63'-linked polyubiquitination. The sequence is that of Ubiquitin-conjugating enzyme E2 T (UBE2T) from Bos taurus (Bovine).